Reading from the N-terminus, the 370-residue chain is Lipoyl synthase, mitochondrial (370 aa).

Residues Cys-100, Cys-105, Cys-111, Cys-131, Cys-135, Cys-138, and Ser-346 each coordinate [4Fe-4S] cluster. A Radical SAM core domain is found at 116-335; the sequence is DKSRATATIM…KEVAEKLGFL (220 aa).

The protein belongs to the radical SAM superfamily. Lipoyl synthase family. It depends on [4Fe-4S] cluster as a cofactor.

The protein resides in the mitochondrion. The enzyme catalyses [[Fe-S] cluster scaffold protein carrying a second [4Fe-4S](2+) cluster] + N(6)-octanoyl-L-lysyl-[protein] + 2 oxidized [2Fe-2S]-[ferredoxin] + 2 S-adenosyl-L-methionine + 4 H(+) = [[Fe-S] cluster scaffold protein] + N(6)-[(R)-dihydrolipoyl]-L-lysyl-[protein] + 4 Fe(3+) + 2 hydrogen sulfide + 2 5'-deoxyadenosine + 2 L-methionine + 2 reduced [2Fe-2S]-[ferredoxin]. The protein operates within protein modification; protein lipoylation via endogenous pathway; protein N(6)-(lipoyl)lysine from octanoyl-[acyl-carrier-protein]: step 2/2. Functionally, catalyzes the radical-mediated insertion of two sulfur atoms into the C-6 and C-8 positions of the octanoyl moiety bound to the lipoyl domains of lipoate-dependent enzymes, thereby converting the octanoylated domains into lipoylated derivatives. This is Lipoyl synthase, mitochondrial (lip5) from Schizosaccharomyces pombe (strain 972 / ATCC 24843) (Fission yeast).